The primary structure comprises 156 residues: Type II secretion system core protein G (156 aa).

The propeptide at 1-22 is leader sequence; it reads MQQSQRGCGQNSYGQSGYRQRG. F23 carries the N-methylphenylalanine modification. A helical membrane pass occupies residues 23-43; the sequence is FTLLEIMVVIVILGVLASLVV.

It belongs to the GSP G family. Type II secretion system is composed of four main components: the outer membrane complex, the inner membrane complex, the cytoplasmic secretion ATPase and the periplasm-spanning pseudopilus. Forms homomultimers. Post-translationally, cleaved by the prepilin peptidase. Methylated by prepilin peptidase at the amino group of the N-terminal phenylalanine once the leader sequence is cleaved.

It is found in the cell inner membrane. Core component of the type II secretion system required for the energy-dependent secretion of extracellular factors such as proteases and toxins from the periplasm. Pseudopilin (pilin-like) protein that polymerizes to form the pseudopilus. Further polymerization triggers pseudopilus growth. In Pectobacterium carotovorum subsp. carotovorum (Erwinia carotovora subsp. carotovora), this protein is Type II secretion system core protein G (outG).